The primary structure comprises 123 residues: Putative C-type lectin protein FPV003/FPV258 (123 aa).

In terms of domain architecture, C-type lectin spans 21–122 (CRGPYTSYNN…CNATYGFVCI (102 aa)).

This Fowlpox virus (strain NVSL) (FPV) protein is Putative C-type lectin protein FPV003/FPV258.